The sequence spans 406 residues: NADH-quinone oxidoreductase subunit D (406 aa).

It belongs to the complex I 49 kDa subunit family. In terms of assembly, NDH-1 is composed of 14 different subunits. Subunits NuoB, C, D, E, F, and G constitute the peripheral sector of the complex.

Its subcellular location is the cell inner membrane. The enzyme catalyses a quinone + NADH + 5 H(+)(in) = a quinol + NAD(+) + 4 H(+)(out). In terms of biological role, NDH-1 shuttles electrons from NADH, via FMN and iron-sulfur (Fe-S) centers, to quinones in the respiratory chain. The immediate electron acceptor for the enzyme in this species is believed to be ubiquinone. Couples the redox reaction to proton translocation (for every two electrons transferred, four hydrogen ions are translocated across the cytoplasmic membrane), and thus conserves the redox energy in a proton gradient. This Acidiphilium cryptum (strain JF-5) protein is NADH-quinone oxidoreductase subunit D.